Reading from the N-terminus, the 163-residue chain is Protein-export protein SecB (163 aa).

Belongs to the SecB family. Homotetramer, a dimer of dimers. One homotetramer interacts with 1 SecA dimer.

It localises to the cytoplasm. Functionally, one of the proteins required for the normal export of preproteins out of the cell cytoplasm. It is a molecular chaperone that binds to a subset of precursor proteins, maintaining them in a translocation-competent state. It also specifically binds to its receptor SecA. This Brucella abortus (strain S19) protein is Protein-export protein SecB.